The primary structure comprises 254 residues: Nickel import ATP-binding protein NikD (254 aa).

The region spanning 2 to 241 is the ABC transporter domain; it reads PQQIELRNIA…PKHTVTRSLV (240 aa). 36–43 contacts ATP; sequence GGSGSGKS.

Belongs to the ABC transporter superfamily. Nickel importer (TC 3.A.1.5.3) family. In terms of assembly, the complex is composed of two ATP-binding proteins (NikD and NikE), two transmembrane proteins (NikB and NikC) and a solute-binding protein (NikA).

Its subcellular location is the cell inner membrane. It catalyses the reaction Ni(2+)(out) + ATP + H2O = Ni(2+)(in) + ADP + phosphate + H(+). Its function is as follows. Part of the ABC transporter complex NikABCDE involved in nickel import. Responsible for energy coupling to the transport system. This is Nickel import ATP-binding protein NikD from Shigella flexneri serotype 5b (strain 8401).